Reading from the N-terminus, the 148-residue chain is Aspartate carbamoyltransferase regulatory chain (148 aa).

Cys106, Cys111, Cys134, and Cys137 together coordinate Zn(2+).

The protein belongs to the PyrI family. In terms of assembly, contains catalytic and regulatory chains. Requires Zn(2+) as cofactor.

Involved in allosteric regulation of aspartate carbamoyltransferase. This is Aspartate carbamoyltransferase regulatory chain from Methanococcus maripaludis (strain C7 / ATCC BAA-1331).